The sequence spans 391 residues: Matrix metalloproteinase-23 (391 aa).

The Cytoplasmic segment spans residues 1 to 18 (MGCRACLRPEASGAVQGR). The propeptide occupies 1-79 (MGCRACLRPE…LTMSVTRRRR (79 aa)). Residues 19–39 (WLGAALSGLCLLSALALLEWL) form a helical membrane-spanning segment. Residues 40–391 (GAPTETAWRA…TYSWRVRVRN (352 aa)) lie on the Lumenal side of the membrane. N-linked (GlcNAc...) asparagine glycans are attached at residues asparagine 93 and asparagine 149. Histidine 212 is a Zn(2+) binding site. The active site involves glutamate 213. Residues histidine 216 and histidine 222 each contribute to the Zn(2+) site. A glycan (N-linked (GlcNAc...) asparagine) is linked at asparagine 233. A ShKT domain is found at 256-290 (CLDRIFVCASWARKGFCDVRQRLMKRLCPRSCDFC). 3 disulfide bridges follow: cysteine 256–cysteine 290, cysteine 263–cysteine 283, and cysteine 272–cysteine 287. One can recognise an Ig-like C2-type domain in the interval 298–383 (VATTTSPTRT…RRHQRVLSTY (86 aa)). Asparagine 317 is a glycosylation site (N-linked (GlcNAc...) asparagine). Cysteine 322 and cysteine 371 form a disulfide bridge.

Belongs to the peptidase M10A family. The cofactor is Zn(2+). N-glycosylated. In terms of processing, proteolytic cleavage might yield an active form. As to expression, expressed at relatively high level in heart, lung and spleen. Not detected in brain, liver, skeletal muscle, kidney and testis.

Its subcellular location is the endoplasmic reticulum membrane. It is found in the membrane. With respect to regulation, inhibited by TIMP2. In terms of biological role, protease. May regulate the surface expression of some potassium channels by retaining them in the endoplasmic reticulum. This Mus musculus (Mouse) protein is Matrix metalloproteinase-23 (Mmp23).